Reading from the N-terminus, the 602-residue chain is Aspartate--tRNA(Asp/Asn) ligase (602 aa).

Glutamate 176 lines the L-aspartate pocket. The segment at 200–203 (QQFK) is aspartate. L-aspartate contacts are provided by arginine 222 and histidine 452. 222–224 (RDE) lines the ATP pocket. Glutamate 490 contacts ATP. An L-aspartate-binding site is contributed by arginine 497. Residue 542-545 (GIDR) coordinates ATP.

This sequence belongs to the class-II aminoacyl-tRNA synthetase family. Type 1 subfamily. In terms of assembly, homodimer.

Its subcellular location is the cytoplasm. It catalyses the reaction tRNA(Asx) + L-aspartate + ATP = L-aspartyl-tRNA(Asx) + AMP + diphosphate. Its function is as follows. Aspartyl-tRNA synthetase with relaxed tRNA specificity since it is able to aspartylate not only its cognate tRNA(Asp) but also tRNA(Asn). Reaction proceeds in two steps: L-aspartate is first activated by ATP to form Asp-AMP and then transferred to the acceptor end of tRNA(Asp/Asn). The sequence is that of Aspartate--tRNA(Asp/Asn) ligase from Rickettsia conorii (strain ATCC VR-613 / Malish 7).